The sequence spans 415 residues: Gamma-glutamyl phosphate reductase (415 aa).

Belongs to the gamma-glutamyl phosphate reductase family.

Its subcellular location is the cytoplasm. It catalyses the reaction L-glutamate 5-semialdehyde + phosphate + NADP(+) = L-glutamyl 5-phosphate + NADPH + H(+). Its pathway is amino-acid biosynthesis; L-proline biosynthesis; L-glutamate 5-semialdehyde from L-glutamate: step 2/2. Its function is as follows. Catalyzes the NADPH-dependent reduction of L-glutamate 5-phosphate into L-glutamate 5-semialdehyde and phosphate. The product spontaneously undergoes cyclization to form 1-pyrroline-5-carboxylate. This Lachnospira eligens (strain ATCC 27750 / DSM 3376 / VPI C15-48 / C15-B4) (Eubacterium eligens) protein is Gamma-glutamyl phosphate reductase.